Reading from the N-terminus, the 583-residue chain is Aspartate--tRNA(Asp/Asn) ligase (583 aa).

An L-aspartate-binding site is contributed by Glu173. Residues 197–200 (QMFK) form an aspartate region. Position 219 (Arg219) interacts with L-aspartate. ATP contacts are provided by residues 219-221 (RDE) and Gln228. L-aspartate is bound at residue His447. Residue Glu481 coordinates ATP. Arg488 lines the L-aspartate pocket. 533 to 536 (GLDR) provides a ligand contact to ATP.

The protein belongs to the class-II aminoacyl-tRNA synthetase family. Type 1 subfamily. As to quaternary structure, homodimer.

It is found in the cytoplasm. The catalysed reaction is tRNA(Asx) + L-aspartate + ATP = L-aspartyl-tRNA(Asx) + AMP + diphosphate. Its function is as follows. Aspartyl-tRNA synthetase with relaxed tRNA specificity since it is able to aspartylate not only its cognate tRNA(Asp) but also tRNA(Asn). Reaction proceeds in two steps: L-aspartate is first activated by ATP to form Asp-AMP and then transferred to the acceptor end of tRNA(Asp/Asn). This Elusimicrobium minutum (strain Pei191) protein is Aspartate--tRNA(Asp/Asn) ligase.